The sequence spans 535 residues: BAR/IMD domain-containing adapter protein 2 (535 aa).

In terms of domain architecture, IMD spans 1 to 250 (MSLSRSEEMH…VQLMQQMANS (250 aa)). The stretch at 88–153 (NQLEETLKSF…LRKKSQGSKN (66 aa)) forms a coiled coil. A phosphoserine mark is found at S262, S324, S326, and S337. Positions 299–370 (VMNGVAGPDS…TLPRSSSMAA (72 aa)) are disordered. Low complexity predominate over residues 321-335 (QPKSLSPPQSQSKLS). The residue at position 341 (T341) is a Phosphothreonine. S347 carries the phosphoserine modification. The segment covering 349-368 (TPKNSYATTENKTLPRSSSM) has biased composition (polar residues). T361 is modified (phosphothreonine). Phosphoserine occurs at positions 367, 385, 396, and 455. In terms of domain architecture, SH3 spans 375–438 (NGRMRVKAIF…PFSYTRVLDS (64 aa)). The interval 445-477 (HMSLQQGKSSSTGNLLDKDDLALPPPDYGTSSR) is disordered. Residues 447–458 (SLQQGKSSSTGN) are compositionally biased toward polar residues.

As to quaternary structure, homodimer. Interacts with CDC42 and RAC1 that have been activated by GTP binding. Binds DIAPH1. Interacts with ATN1, ADGRB1, SHANK1, SHANK2, SHANK3, TIAM1, WASF1 and WASF2. Interacts with ENAH after recruitment of CDC42. Interacts with EPS8. Phosphorylated on tyrosine residues by INSR in response to insulin treatment. In terms of tissue distribution, detected in liver, brain, olfactory bulb, brain cortex, caudate putamen, hypothalamus and cerebellum.

The protein localises to the cytoplasm. It is found in the membrane. Its subcellular location is the cell projection. The protein resides in the filopodium. It localises to the ruffle. The protein localises to the cytoskeleton. Functionally, adapter protein that links membrane-bound small G-proteins to cytoplasmic effector proteins. Necessary for CDC42-mediated reorganization of the actin cytoskeleton and for RAC1-mediated membrane ruffling. Involved in the regulation of the actin cytoskeleton by WASF family members and the Arp2/3 complex. Plays a role in neurite growth. Acts syngeristically with ENAH to promote filipodia formation. Plays a role in the reorganization of the actin cytoskeleton in response to bacterial infection. Participates in actin bundling when associated with EPS8, promoting filopodial protrusions. This Mus musculus (Mouse) protein is BAR/IMD domain-containing adapter protein 2 (Baiap2).